A 966-amino-acid chain; its full sequence is Insulin-degrading enzyme-like 2 (966 aa).

His71 is a binding site for Zn(2+). Catalysis depends on Glu74, which acts as the Proton acceptor. His75 contributes to the Zn(2+) binding site. Residue Glu145 is part of the active site. Glu152 lines the Zn(2+) pocket.

This sequence belongs to the peptidase M16 family. Zn(2+) serves as cofactor.

This Arabidopsis thaliana (Mouse-ear cress) protein is Insulin-degrading enzyme-like 2.